The primary structure comprises 495 residues: Probable aspartic-type endopeptidase OPSB (495 aa).

A signal peptide spans 1–19; the sequence is MRGDSFIWSLATAIPLLST. One can recognise a Peptidase A1 domain in the interval 73-408; sequence YFCNLTLGTP…DLDNNEISIA (336 aa). An N-linked (GlcNAc...) asparagine glycan is attached at asparagine 76. Aspartate 91 is a catalytic residue. Asparagine 136 carries N-linked (GlcNAc...) asparagine glycosylation. Aspartate 290 is an active-site residue. Asparagine 413 carries an N-linked (GlcNAc...) asparagine glycan. The disordered stretch occupies residues 447–470; the sequence is ATGLPGVETGVPGSRPPSSKAAGQ. Alanine 467 carries the GPI-anchor amidated alanine lipid modification. Positions 468-495 are cleaved as a propeptide — removed in mature form; sequence AGQAKRPDFVLGVAAVGLAGAGMLFAAM.

This sequence belongs to the peptidase A1 family.

The protein resides in the cell membrane. Probable GPI-anchored aspartic-type endopeptidase which contributes to virulence. This Arthroderma benhamiae (strain ATCC MYA-4681 / CBS 112371) (Trichophyton mentagrophytes) protein is Probable aspartic-type endopeptidase OPSB (OPSB).